Consider the following 545-residue polypeptide: MTELTQGKAWKTLEAHTQALPHMRALFEADTKRFDNMSTSACGLFLDYSKNRANKETMSLLFSVAEDAQLESKIKAMFNGEMINTTEKRAVLHTALRAKPEQEIMLNGVNIVQEVQETQQQMELFVDAVSSGNWKGYTGKKITDIVSIGIGGSFLGPKIVSQALRPYWSKQLNCHFVANVDASSIVEKLKPLNAETTLFIMSSKSFGTQETLTNTLSAKDWFIEQGGSQADVAKHFVAVTSNVEKATEFGIDADNIFPMWDWVGGRYSLWSAIGLPIALLVGMDNFRALLSGANEMDQHFANTPLSENMPVIMGLFSLLYGNFHDAQSHVVLTYDHYLRGLPAYFQQLDMESNGKSVTLDGTEVDHSTGPVIWGGEGTNGQHAYHQLLHQGTALIPADFIMPLQSHNPLGEHHVQLASNCFGQTQALMQGRSYEEALKELAGSKLPADEKSVIAKHKVMQGNKPSNTILMDKLTPTTLGALIALYEHRTFVQGAIWQINSFDQWGVELGKTLGNDVLDRLSAENDATELDCSSNGLINMFRQKKI.

The active-site Proton donor is the E351. Active-site residues include H382 and K510.

It belongs to the GPI family.

Its subcellular location is the cytoplasm. The enzyme catalyses alpha-D-glucose 6-phosphate = beta-D-fructose 6-phosphate. Its pathway is carbohydrate biosynthesis; gluconeogenesis. It functions in the pathway carbohydrate degradation; glycolysis; D-glyceraldehyde 3-phosphate and glycerone phosphate from D-glucose: step 2/4. Its function is as follows. Catalyzes the reversible isomerization of glucose-6-phosphate to fructose-6-phosphate. This chain is Glucose-6-phosphate isomerase, found in Shewanella sediminis (strain HAW-EB3).